Here is a 441-residue protein sequence, read N- to C-terminus: Chitinase-like protein Idgf3 (441 aa).

Positions 1–23 (MTGSLWLSLALSLAVLAQFKVSA) are cleaved as a signal peptide. The GH18 domain occupies 25–441 (PNLVCFYDSQ…MLRAIKYRLL (417 aa)). A disulfide bond links Cys29 and Cys56. Residue Asn221 is glycosylated (N-linked (GlcNAc...) asparagine). The interval 309-331 (SGDSGMPVVPSTQGPAPAGPQSK) is disordered. Cys342 and Cys425 are oxidised to a cystine.

Belongs to the glycosyl hydrolase 18 family. IDGF subfamily. Post-translationally, glycosylated.

The protein resides in the secreted. Its function is as follows. Cooperates with insulin-like peptides to stimulate the proliferation, polarization and motility of imaginal disk cells. May act by stabilizing the binding of insulin-like peptides to its receptor through a simultaneous interaction with both molecules to form a multiprotein signaling complex. This chain is Chitinase-like protein Idgf3 (Idgf3), found in Drosophila yakuba (Fruit fly).